Reading from the N-terminus, the 183-residue chain is Putative NAD(P)H nitroreductase YdjA (183 aa).

FMN-binding positions include 10–12, Arg35, and His39; that span reads RRS. 121 to 126 contacts NAD(+); it reads AAVAQG. 131 to 133 serves as a coordination point for FMN; the sequence is WRS.

It belongs to the nitroreductase family. As to quaternary structure, homodimer. It depends on FMN as a cofactor.

This chain is Putative NAD(P)H nitroreductase YdjA (ydjA), found in Escherichia coli O157:H7.